The primary structure comprises 783 residues: Probable phosphoketolase (783 aa).

The protein belongs to the XFP family. The cofactor is thiamine diphosphate.

The sequence is that of Probable phosphoketolase from Rhodopseudomonas palustris (strain ATCC BAA-98 / CGA009).